The primary structure comprises 96 residues: MTMDTAQLKSQIQQYLVESGNYELISNELKARLLQEGWVDKVKDLTKSEMNINESTNFTQILSTVEPKALEIVSDSTRETVLKQIREFLEGIVDTQ.

Lys-68 is covalently cross-linked (Glycyl lysine isopeptide (Lys-Gly) (interchain with G-Cter in ubiquitin)).

Belongs to the ENY2 family. As to quaternary structure, component of the nuclear pore complex (NPC)-associated TREX-2 complex (transcription and export complex 2), composed of at least SUS1, SAC3, THP1, SEM1, and CDC31. TREX-2 contains 2 SUS1 chains. The TREX-2 complex interacts with the nucleoporin NUP1. Component of the 1.8 MDa SAGA transcription coactivator-HAT complex. SAGA is built of 5 distinct domains with specialized functions. Within the SAGA complex, SUS1, SGF11, SGF73 and UBP8 form an additional subcomplex of SAGA called the DUB module (deubiquitination module). Interacts directly with THP1, SAC3, SGF11, and with the RNA polymerase II.

It is found in the nucleus. The protein resides in the nucleoplasm. It localises to the cytoplasm. Its subcellular location is the P-body. Involved in mRNA export coupled transcription activation by association with both the TREX-2 and the SAGA complexes. At the promoters, SAGA is required for recruitment of the basal transcription machinery. It influences RNA polymerase II transcriptional activity through different activities such as TBP interaction and promoter selectivity, interaction with transcription activators, and chromatin modification through histone acetylation and deubiquitination. Within the SAGA complex, participates in a subcomplex required for deubiquitination of H2B and for the maintenance of steady-state H3 methylation levels. The TREX-2 complex functions in docking export-competent ribonucleoprotein particles (mRNPs) to the nuclear entrance of the nuclear pore complex (nuclear basket). TREX-2 participates in mRNA export and accurate chromatin positioning in the nucleus by tethering genes to the nuclear periphery. May also be involved in cytoplasmic mRNA decay by interaction with components of P-bodies. In Saccharomyces cerevisiae (strain YJM789) (Baker's yeast), this protein is Transcription and mRNA export factor SUS1.